The primary structure comprises 346 residues: Cell division protein ZipA (346 aa).

Residues Met-1–Leu-6 lie on the Periplasmic side of the membrane. The helical transmembrane segment at Val-7–Ile-27 threads the bilayer. Residues Arg-28–Ala-346 lie on the Cytoplasmic side of the membrane. 2 disordered regions span residues Ala-76–Glu-103 and Gln-121–Pro-145.

It belongs to the ZipA family. Interacts with FtsZ via their C-terminal domains.

It is found in the cell inner membrane. Essential cell division protein that stabilizes the FtsZ protofilaments by cross-linking them and that serves as a cytoplasmic membrane anchor for the Z ring. Also required for the recruitment to the septal ring of downstream cell division proteins. This chain is Cell division protein ZipA, found in Shewanella sp. (strain MR-4).